Reading from the N-terminus, the 312-residue chain is Elongation factor Ts (312 aa).

The tract at residues 84 to 87 is involved in Mg(2+) ion dislocation from EF-Tu; sequence TDFV.

The protein belongs to the EF-Ts family.

It is found in the cytoplasm. Associates with the EF-Tu.GDP complex and induces the exchange of GDP to GTP. It remains bound to the aminoacyl-tRNA.EF-Tu.GTP complex up to the GTP hydrolysis stage on the ribosome. This is Elongation factor Ts from Caulobacter vibrioides (strain ATCC 19089 / CIP 103742 / CB 15) (Caulobacter crescentus).